The following is a 196-amino-acid chain: Probable peptidyl-prolyl cis-trans isomerase (196 aa).

The first 26 residues, 1 to 26 (MSFIRSALAAAAFVALSIGAVQTASA), serve as a signal peptide directing secretion. One can recognise a PPIase cyclophilin-type domain in the interval 29 to 194 (PENTVILKLK…KIIKATIEAD (166 aa)).

The protein belongs to the cyclophilin-type PPIase family.

It is found in the periplasm. The catalysed reaction is [protein]-peptidylproline (omega=180) = [protein]-peptidylproline (omega=0). PPIases accelerate the folding of proteins. It catalyzes the cis-trans isomerization of proline imidic peptide bonds in oligopeptides. The chain is Probable peptidyl-prolyl cis-trans isomerase (ppi) from Brucella abortus (strain 2308).